The primary structure comprises 513 residues: ATP synthase subunit alpha (513 aa).

169 to 176 (GDRQTGKT) is a binding site for ATP.

Belongs to the ATPase alpha/beta chains family. In terms of assembly, F-type ATPases have 2 components, CF(1) - the catalytic core - and CF(0) - the membrane proton channel. CF(1) has five subunits: alpha(3), beta(3), gamma(1), delta(1), epsilon(1). CF(0) has three main subunits: a(1), b(2) and c(9-12). The alpha and beta chains form an alternating ring which encloses part of the gamma chain. CF(1) is attached to CF(0) by a central stalk formed by the gamma and epsilon chains, while a peripheral stalk is formed by the delta and b chains.

The protein resides in the cell inner membrane. It carries out the reaction ATP + H2O + 4 H(+)(in) = ADP + phosphate + 5 H(+)(out). Produces ATP from ADP in the presence of a proton gradient across the membrane. The alpha chain is a regulatory subunit. This chain is ATP synthase subunit alpha, found in Proteus mirabilis (strain HI4320).